A 519-amino-acid chain; its full sequence is Dolichol kinase (519 aa).

The Cytoplasmic segment spans residues 1–47; sequence MVAIIPHASFTTIKLTQKTEGSQMPTEEICKINMRTRKFDVGGNSRD. A helical membrane pass occupies residues 48-68; the sequence is FECFYSNFVQTVILLGTFFYC. Topologically, residues 69-88 are lumenal; sequence VERLQPWSIVTADISYKQIF. Residues 89-109 traverse the membrane as a helical segment; sequence VNVFVVCLIMVGLIFTKYWQH. Topologically, residues 110-118 are cytoplasmic; it reads GYKSLPKFD. A helical membrane pass occupies residues 119–139; sequence TIYSLYLPFMVSLLFDTSSTV. The Lumenal segment spans residues 140 to 151; it reads INTILILSVLNS. Residues 152 to 172 traverse the membrane as a helical segment; it reads YRWRTQLVVIILQLCLIFFNF. Over 173–181 the chain is Cytoplasmic; that stretch reads EAGDRLKNI. A helical membrane pass occupies residues 182-203; sequence ISIVINSLLSLILKYIGQLKSL. Residues 204-223 are Lumenal-facing; it reads DNIDSNLFSILLTNILYVSE. Residues 224–244 form a helical membrane-spanning segment; sequence AGTVHFRILKGIILALTTIIS. The Cytoplasmic portion of the chain corresponds to 245 to 253; that stretch reads INYVLKKVM. Residues 254–274 form a helical membrane-spanning segment; sequence HFKPFMLSISFAIGLPLFANT. Over 275–294 the chain is Lumenal; that stretch reads FIHLEDGENPLLWLVKYILE. A helical membrane pass occupies residues 295-315; the sequence is STIRQKILFAWSSILILSIPS. The Cytoplasmic segment spans residues 316–326; the sequence is ILIEKDSLSLN. The chain crosses the membrane as a helical span at residues 327–347; the sequence is TSRKLWHFIIFLLIIPSFQMD. The Lumenal portion of the chain corresponds to 348 to 349; the sequence is SN. Residues 350–370 traverse the membrane as a helical segment; it reads FVKIALSGTIPVFLSIEYIRF. Residues 371–394 lie on the Cytoplasmic side of the membrane; sequence QNLPPLGSAIELQLRRFADDRDHS. A helical membrane pass occupies residues 395–415; that stretch reads GPLIISYLYLLFGISTPLLMN. Residues 416-417 are Lumenal-facing; that stretch reads NS. A helical transmembrane segment spans residues 418 to 438; the sequence is PMGLIGLGIGDSLASIIGKRY. Residues 439–449 lie on the Cytoplasmic side of the membrane; that stretch reads GRIRWKGTQKT. The helical transmembrane segment at 450–470 threads the bilayer; the sequence is LEGTLAFIVTSFIVCLVLLRF. The Lumenal portion of the chain corresponds to 471–472; that stretch reads DK. Residues 473 to 493 form a helical membrane-spanning segment; sequence AAIFNHLTTLQLLTLCTLSGV. Topologically, residues 494–519 are cytoplasmic; it reads LEGNSVLNDNILIPAFMMICEKLITL.

It belongs to the polyprenol kinase family.

The protein localises to the endoplasmic reticulum membrane. The enzyme catalyses a di-trans,poly-cis-dolichol + CTP = a di-trans,poly-cis-dolichyl phosphate + CDP + H(+). Its pathway is protein modification; protein glycosylation. Catalyzes CTP-mediated phosphorylation of dolichol, the terminal step in de novo dolichyl monophosphate (Dol-P) biosynthesis. Dol-P is a lipid carrier essential for the synthesis of N-linked and O-linked oligosaccharides and for GPI anchors. This is Dolichol kinase (SEC59) from Saccharomyces cerevisiae (strain ATCC 204508 / S288c) (Baker's yeast).